The chain runs to 67 residues: Phycobilisome 7.8 kDa linker polypeptide, allophycocyanin-associated, core (67 aa).

Residues 1–56 (MRMFRITACVPSQTRIRTQRELQNTYFTKLVPYDNWFREQQRIMKMGGKIVKVELA) enclose the CpcD-like domain.

Belongs to the phycobilisome linker protein family.

It is found in the cellular thylakoid membrane. Functionally, rod linker protein, associated with allophycocyanin. Linker polypeptides determine the state of aggregation and the location of the disk-shaped phycobiliprotein units within the phycobilisome and modulate their spectroscopic properties in order to mediate a directed and optimal energy transfer. This Synechocystis sp. (strain PCC 6714) (Aphanocapsa sp. (strain PCC 6714)) protein is Phycobilisome 7.8 kDa linker polypeptide, allophycocyanin-associated, core (apcC).